We begin with the raw amino-acid sequence, 105 residues long: Small cysteine and glycine repeat-containing protein 10 (105 aa).

The tract at residues 4 to 41 is 10 X 2 AA repeats of CG; sequence CGCGGCGGRCSGGCGGGCGGGCGGGCGGGCGGCGGGCG.

Belongs to the KRTAP type 28 family.

In the hair cortex, hair keratin intermediate filaments are embedded in an interfilamentous matrix, consisting of hair keratin-associated proteins (KRTAP), which are essential for the formation of a rigid and resistant hair shaft through their extensive disulfide bond cross-linking with abundant cysteine residues of hair keratins. The matrix proteins include the high-sulfur and high-glycine-tyrosine keratins. The sequence is that of Small cysteine and glycine repeat-containing protein 10 from Homo sapiens (Human).